Reading from the N-terminus, the 95-residue chain is Integration host factor subunit beta (95 aa).

A disordered region spans residues 59 to 95; that stretch reads RVGRNPKTGQSVRLDGKFVPHFKPGKELRDRVNEDES. Residues 72 to 95 are compositionally biased toward basic and acidic residues; it reads LDGKFVPHFKPGKELRDRVNEDES.

The protein belongs to the bacterial histone-like protein family. In terms of assembly, heterodimer of an alpha and a beta chain.

Functionally, this protein is one of the two subunits of integration host factor, a specific DNA-binding protein that functions in genetic recombination as well as in transcriptional and translational control. This is Integration host factor subunit beta from Ectopseudomonas mendocina (strain ymp) (Pseudomonas mendocina).